The sequence spans 245 residues: Eukaryotic translation initiation factor 3 subunit K (245 aa).

The PCI domain maps to 46 to 227 (YDCYANLALL…EAKGTVVREN (182 aa)).

It belongs to the eIF-3 subunit K family. In terms of assembly, component of the eukaryotic translation initiation factor 3 (eIF-3) complex.

The protein resides in the cytoplasm. Functionally, component of the eukaryotic translation initiation factor 3 (eIF-3) complex, which is involved in protein synthesis of a specialized repertoire of mRNAs and, together with other initiation factors, stimulates binding of mRNA and methionyl-tRNAi to the 40S ribosome. The eIF-3 complex specifically targets and initiates translation of a subset of mRNAs involved in cell proliferation. The protein is Eukaryotic translation initiation factor 3 subunit K of Phaeosphaeria nodorum (strain SN15 / ATCC MYA-4574 / FGSC 10173) (Glume blotch fungus).